We begin with the raw amino-acid sequence, 69 residues long: uncharacterized protein (69 aa).

A signal peptide spans 1–16 (MSLGLIFALLLTHAAA).

This is an uncharacterized protein from Archaeoglobus fulgidus (strain ATCC 49558 / DSM 4304 / JCM 9628 / NBRC 100126 / VC-16).